Here is a 115-residue protein sequence, read N- to C-terminus: Superoxide reductase (115 aa).

The Fe cation site is built by glutamate 14, histidine 16, histidine 41, histidine 47, cysteine 102, and histidine 105.

The protein belongs to the desulfoferrodoxin family. In terms of assembly, homotetramer. Fe cation serves as cofactor.

It catalyses the reaction reduced [rubredoxin] + superoxide + 2 H(+) = oxidized [rubredoxin] + H2O2. In terms of biological role, uses electrons from reduced NADP, by way of rubredoxin and an oxidoreductase, to catalyze the reduction of superoxide to hydrogen peroxide. This chain is Superoxide reductase (sorA), found in Pyrococcus horikoshii (strain ATCC 700860 / DSM 12428 / JCM 9974 / NBRC 100139 / OT-3).